We begin with the raw amino-acid sequence, 931 residues long: Protocadherin gamma-B2 (931 aa).

Residues M1 to P30 form the signal peptide. Cadherin domains are found at residues V31–F133, K134–F242, S243–V347, I348–F452, Q453–V562, and D570–L675. The Extracellular portion of the chain corresponds to V31–Y691. N-linked (GlcNAc...) asparagine glycans are attached at residues N419 and N545. A helical transmembrane segment spans residues L692 to S712. Topologically, residues L713–K931 are cytoplasmic. Disordered regions lie at residues D814–N840 and A901–K931. The span at W815–N840 shows a compositional bias: polar residues. Basic residues predominate over residues N921–K931.

It localises to the cell membrane. Potential calcium-dependent cell-adhesion protein. May be involved in the establishment and maintenance of specific neuronal connections in the brain. This chain is Protocadherin gamma-B2 (PCDHGB2), found in Homo sapiens (Human).